A 251-amino-acid chain; its full sequence is CDP-diacylglycerol pyrophosphatase (251 aa).

A helical membrane pass occupies residues 4-24 (AGLLFLVMIVIAVVAAGIGYW).

It belongs to the Cdh family.

The protein localises to the cell inner membrane. It catalyses the reaction a CDP-1,2-diacyl-sn-glycerol + H2O = a 1,2-diacyl-sn-glycero-3-phosphate + CMP + 2 H(+). It participates in phospholipid metabolism; CDP-diacylglycerol degradation; phosphatidate from CDP-diacylglycerol: step 1/1. The protein is CDP-diacylglycerol pyrophosphatase of Shigella flexneri.